Here is a 357-residue protein sequence, read N- to C-terminus: tRNA N6-adenosine threonylcarbamoyltransferase (357 aa).

Fe cation-binding residues include H115 and H119. Substrate contacts are provided by residues 137–141 (LASGG), D170, G183, and N281. D309 serves as a coordination point for Fe cation.

Belongs to the KAE1 / TsaD family. The cofactor is Fe(2+).

It is found in the cytoplasm. The enzyme catalyses L-threonylcarbamoyladenylate + adenosine(37) in tRNA = N(6)-L-threonylcarbamoyladenosine(37) in tRNA + AMP + H(+). Functionally, required for the formation of a threonylcarbamoyl group on adenosine at position 37 (t(6)A37) in tRNAs that read codons beginning with adenine. Is involved in the transfer of the threonylcarbamoyl moiety of threonylcarbamoyl-AMP (TC-AMP) to the N6 group of A37, together with TsaE and TsaB. TsaD likely plays a direct catalytic role in this reaction. In Nitrobacter hamburgensis (strain DSM 10229 / NCIMB 13809 / X14), this protein is tRNA N6-adenosine threonylcarbamoyltransferase.